The following is a 430-amino-acid chain: MGKNVVVLGTQWGDEGKGKIVDLLTDQAAAVVRYQGGHNAGHTLVIDGEKTVLHLIPSGILRDNVECLIGNGVVVAPDALLREIAKLEEKGVPVRERLRISPSCTLILPYHVALDQAREAVRSEGKIGTTGRGIGPAYEDKVARRGLRIGDLFNPERFAKKLHELLEYHNFVLQNFYKVEPVDFQKTLDEALGYAESLKPMIADVAARLHELRKQGARIMFEGAQGSLLDIDHGTYPYVTSSSTTAGGTATGSGFGPLYLDYILGITKAYTTRVGSGPFPTELFDDIGAHLASKGHEFGSTTGRARRCGWFDAVILRRAIEINSISGLCLTKLDVLDGLKTVKLCVAYRNAEGVVIEAPTDADSYVGLEPVYEEMPGWSESTVGIKSLAELPANALAYIKRIEALVGAPIDIISTGPDRNETIVLRHPFA.

GTP is bound by residues 13-19 (GDEGKGK) and 41-43 (GHT). D14 serves as the catalytic Proton acceptor. Positions 14 and 41 each coordinate Mg(2+). IMP contacts are provided by residues 14–17 (DEGK), 39–42 (NAGH), T130, R144, Q225, T240, and R304. H42 (proton donor) is an active-site residue. Residue 300–306 (STTGRAR) participates in substrate binding. GTP contacts are provided by residues R306, 332-334 (KLD), and 414-416 (STG).

It belongs to the adenylosuccinate synthetase family. Homodimer. It depends on Mg(2+) as a cofactor.

The protein localises to the cytoplasm. It catalyses the reaction IMP + L-aspartate + GTP = N(6)-(1,2-dicarboxyethyl)-AMP + GDP + phosphate + 2 H(+). Its pathway is purine metabolism; AMP biosynthesis via de novo pathway; AMP from IMP: step 1/2. Plays an important role in the de novo pathway of purine nucleotide biosynthesis. Catalyzes the first committed step in the biosynthesis of AMP from IMP. In Azotobacter vinelandii (strain DJ / ATCC BAA-1303), this protein is Adenylosuccinate synthetase.